A 249-amino-acid chain; its full sequence is BPI fold-containing family A member 2 (249 aa).

Positions 1–18 (MLQLWKLVLLCGVLTGTS) are cleaved as a signal peptide. N-linked (GlcNAc...) asparagine glycosylation is found at asparagine 124 and asparagine 132. Residues cysteine 174 and cysteine 217 are joined by a disulfide bond.

The protein belongs to the BPI/LBP/Plunc superfamily. Plunc family. Detected in submandibular gland. Secreted into saliva.

It is found in the secreted. Functionally, has strong antibacterial activity against P.aeruginosa. In Homo sapiens (Human), this protein is BPI fold-containing family A member 2 (BPIFA2).